The following is a 408-amino-acid chain: LL-diaminopimelate aminotransferase (408 aa).

The substrate site is built by Y15 and G42. Residues Y72, 108–109 (SK), Y132, N187, Y218, and 246–248 (SFS) contribute to the pyridoxal 5'-phosphate site. Positions 109, 132, and 187 each coordinate substrate. K249 is modified (N6-(pyridoxal phosphate)lysine). Pyridoxal 5'-phosphate is bound by residues R257 and N292. Substrate-binding residues include N292 and R388.

It belongs to the class-I pyridoxal-phosphate-dependent aminotransferase family. LL-diaminopimelate aminotransferase subfamily. As to quaternary structure, homodimer. Pyridoxal 5'-phosphate is required as a cofactor.

The catalysed reaction is (2S,6S)-2,6-diaminopimelate + 2-oxoglutarate = (S)-2,3,4,5-tetrahydrodipicolinate + L-glutamate + H2O + H(+). It participates in amino-acid biosynthesis; L-lysine biosynthesis via DAP pathway; LL-2,6-diaminopimelate from (S)-tetrahydrodipicolinate (aminotransferase route): step 1/1. Involved in the synthesis of meso-diaminopimelate (m-DAP or DL-DAP), required for both lysine and peptidoglycan biosynthesis. Catalyzes the direct conversion of tetrahydrodipicolinate to LL-diaminopimelate. In Leptospira borgpetersenii serovar Hardjo-bovis (strain JB197), this protein is LL-diaminopimelate aminotransferase.